The sequence spans 952 residues: Probable mixed-linked glucan synthase 6 (952 aa).

2 helical membrane-spanning segments follow: residues Leu-102–Ile-122 and Ala-132–Leu-152. The active site involves Asp-227. The stretch at Glu-278–Arg-308 forms a coiled coil. The substrate site is built by Asp-429 and Asp-431. Asp-636 is a catalytic residue. The next 6 helical transmembrane spans lie at Leu-718 to Val-738, Met-744 to Val-764, Met-782 to Phe-802, Trp-834 to Phe-854, Trp-865 to Phe-885, and Val-898 to Ile-918.

Belongs to the glycosyltransferase 2 family. Plant cellulose synthase-like F subfamily.

The protein resides in the golgi apparatus membrane. In terms of biological role, may catalyze both beta-1,3 and beta-1,4 glycosidic linkage on beta-D-glucan. Essential for (1,3;1,4)-beta-D-glucans synthesis in grasses and cereals (Poaceae). The mixed-linked glucans (which are not present in walls of dicotyledons or most other monocotyledonous plants) are particularly important constituents of the walls of the starchy endosperm and aleurone cells of cereal grains such as oats, wheat, rice and barley. They can account for up to 70% by weight of the wall. This chain is Probable mixed-linked glucan synthase 6 (CSLF6), found in Oryza sativa subsp. japonica (Rice).